The primary structure comprises 398 residues: Tear acid lipase-like protein (398 aa).

Positions 1 to 19 (MSWLLSTMCLVHVCGNIFC) are cleaved as a signal peptide. The active-site Nucleophile is the S170. C243 and C252 are disulfide-bonded. N268 is a glycosylation site (N-linked (GlcNAc...) asparagine). Active-site charge relay system residues include D340 and H369.

The protein belongs to the AB hydrolase superfamily. Lipase family. In terms of assembly, monomer. Post-translationally, N-glycosylated. As to expression, expressed in female lacrimal gland acinar cells from where it is secreted into tears (at protein level).

It localises to the secreted. Functionally, female-specific protein which lacks detectable lipase activity against a range of substrates. Binds the hydrophobic lipid 1-aminoanthracene with high affinity. The sequence is that of Tear acid lipase-like protein from Mesocricetus auratus (Golden hamster).